Reading from the N-terminus, the 169-residue chain is Succinate dehydrogenase cytochrome b560 subunit, mitochondrial (169 aa).

A mitochondrion-targeting transit peptide spans Met1–Pro29. The Mitochondrial matrix portion of the chain corresponds to Leu30–Ser62. The helical transmembrane segment at Leu63–Val92 threads the bilayer. Residues Pro93–Leu112 lie on the Mitochondrial intermembrane side of the membrane. Residues Ile113 to Trp137 form a helical membrane-spanning segment. His127 contacts heme b. Residues Asp138–Thr144 are Mitochondrial matrix-facing. The helical transmembrane segment at Ile145–Leu166 threads the bilayer. Topologically, residues Ala167–Met169 are mitochondrial intermembrane.

This sequence belongs to the cytochrome b560 family. In terms of assembly, component of complex II composed of four subunits: the flavoprotein (FP) SDHA, iron-sulfur protein (IP) SDHB, and a cytochrome b560 composed of SDHC and SDHD. Heme b is required as a cofactor. The N-terminus is blocked.

The protein resides in the mitochondrion inner membrane. Its pathway is carbohydrate metabolism; tricarboxylic acid cycle. Membrane-anchoring subunit of succinate dehydrogenase (SDH) that is involved in complex II of the mitochondrial electron transport chain and is responsible for transferring electrons from succinate to ubiquinone (coenzyme Q). SDH also oxidizes malate to the non-canonical enol form of oxaloacetate, enol-oxaloacetate. Enol-oxaloacetate, which is a potent inhibitor of the succinate dehydrogenase activity, is further isomerized into keto-oxaloacetate. The chain is Succinate dehydrogenase cytochrome b560 subunit, mitochondrial (SDHC) from Bos taurus (Bovine).